The following is a 389-amino-acid chain: Pregnancy-associated glycoprotein 1 (389 aa).

A signal peptide spans 1–15; that stretch reads MKWLVILGLVALSEC. In terms of domain architecture, Peptidase A1 spans 76–386; that stretch reads YVGNITIGTP…DRGQNRIGLR (311 aa). N79 carries N-linked (GlcNAc...) asparagine glycosylation. D94 is an active-site residue. An intrachain disulfide couples C107 to C112. A glycan (N-linked (GlcNAc...) asparagine) is linked at N130. An intrachain disulfide couples C268 to C272. D277 is an active-site residue. The cysteines at positions 311 and 345 are disulfide-linked. N348 carries N-linked (GlcNAc...) asparagine glycosylation.

It belongs to the peptidase A1 family. As to expression, expressed throughout the chorion, with the signal localized exclusively over the trophectoderm.

Its subcellular location is the secreted. It is found in the extracellular space. In terms of biological role, appears to be proteolytically inactive. This chain is Pregnancy-associated glycoprotein 1, found in Sus scrofa (Pig).